The primary structure comprises 151 residues: MGSDDLSAGDKIQKGFQINNMILRDADSGKIIWQENKDFSAPDVEHEARVPIKILDMRAVSREINFSTIESMENFRLDQKVLFKGRIMEEWFFEMGFVGANTTNTWQSTIEAAPESQMMPAKVLNGNVTIQTSFYDNETLITKSVVRLYYI.

It belongs to the PDE6D/unc-119 family. As to quaternary structure, interacts with Pde6.

The protein resides in the nucleus. Its subcellular location is the cytoplasm. This chain is Probable cGMP 3',5'-cyclic phosphodiesterase subunit delta, found in Drosophila willistoni (Fruit fly).